A 175-amino-acid polypeptide reads, in one-letter code: uncharacterized protein (175 aa).

This is an uncharacterized protein from Treponema pallidum (strain Nichols).